Here is a 104-residue protein sequence, read N- to C-terminus: Large ribosomal subunit protein uL24 (104 aa).

Belongs to the universal ribosomal protein uL24 family. Part of the 50S ribosomal subunit.

Functionally, one of two assembly initiator proteins, it binds directly to the 5'-end of the 23S rRNA, where it nucleates assembly of the 50S subunit. Its function is as follows. One of the proteins that surrounds the polypeptide exit tunnel on the outside of the subunit. This is Large ribosomal subunit protein uL24 from Bradyrhizobium sp. (strain ORS 278).